Reading from the N-terminus, the 879-residue chain is Alanine--tRNA ligase (879 aa).

The interval 426–449 (KQKERARNARGNMDGESWKEDPLS) is disordered. Residues His566, His570, Cys668, and His672 each coordinate Zn(2+).

It belongs to the class-II aminoacyl-tRNA synthetase family. Requires Zn(2+) as cofactor.

The protein localises to the cytoplasm. It catalyses the reaction tRNA(Ala) + L-alanine + ATP = L-alanyl-tRNA(Ala) + AMP + diphosphate. Its function is as follows. Catalyzes the attachment of alanine to tRNA(Ala) in a two-step reaction: alanine is first activated by ATP to form Ala-AMP and then transferred to the acceptor end of tRNA(Ala). Also edits incorrectly charged Ser-tRNA(Ala) and Gly-tRNA(Ala) via its editing domain. This Clostridioides difficile (strain 630) (Peptoclostridium difficile) protein is Alanine--tRNA ligase.